Here is a 154-residue protein sequence, read N- to C-terminus: Large ribosomal subunit protein uL23 (154 aa).

It belongs to the universal ribosomal protein uL23 family.

Functionally, this protein binds to a specific region on the 26S rRNA. In Daucus carota (Wild carrot), this protein is Large ribosomal subunit protein uL23 (RPL23A).